The chain runs to 356 residues: Phosphoribosylformylglycinamidine cyclo-ligase (356 aa).

Belongs to the AIR synthase family.

It localises to the cytoplasm. It carries out the reaction 2-formamido-N(1)-(5-O-phospho-beta-D-ribosyl)acetamidine + ATP = 5-amino-1-(5-phospho-beta-D-ribosyl)imidazole + ADP + phosphate + H(+). The protein operates within purine metabolism; IMP biosynthesis via de novo pathway; 5-amino-1-(5-phospho-D-ribosyl)imidazole from N(2)-formyl-N(1)-(5-phospho-D-ribosyl)glycinamide: step 2/2. The polypeptide is Phosphoribosylformylglycinamidine cyclo-ligase (Nitrobacter hamburgensis (strain DSM 10229 / NCIMB 13809 / X14)).